The sequence spans 338 residues: Anthranilate phosphoribosyltransferase (338 aa).

Residues glycine 81, 84 to 85 (GD), threonine 89, 91 to 94 (NIST), 109 to 117 (KHGNRSMVS), and serine 121 contribute to the 5-phospho-alpha-D-ribose 1-diphosphate site. An anthranilate-binding site is contributed by glycine 81. Serine 93 provides a ligand contact to Mg(2+). Residue asparagine 112 participates in anthranilate binding. Arginine 167 serves as a coordination point for anthranilate. Mg(2+) is bound by residues aspartate 226 and glutamate 227.

Belongs to the anthranilate phosphoribosyltransferase family. In terms of assembly, homodimer. Mg(2+) serves as cofactor.

The catalysed reaction is N-(5-phospho-beta-D-ribosyl)anthranilate + diphosphate = 5-phospho-alpha-D-ribose 1-diphosphate + anthranilate. It participates in amino-acid biosynthesis; L-tryptophan biosynthesis; L-tryptophan from chorismate: step 2/5. Functionally, catalyzes the transfer of the phosphoribosyl group of 5-phosphorylribose-1-pyrophosphate (PRPP) to anthranilate to yield N-(5'-phosphoribosyl)-anthranilate (PRA). The chain is Anthranilate phosphoribosyltransferase from Acidithiobacillus ferrooxidans (strain ATCC 23270 / DSM 14882 / CIP 104768 / NCIMB 8455) (Ferrobacillus ferrooxidans (strain ATCC 23270)).